A 251-amino-acid chain; its full sequence is Triosephosphate isomerase (251 aa).

9–11 (NWK) serves as a coordination point for substrate. The active-site Electrophile is the His95. Glu167 functions as the Proton acceptor in the catalytic mechanism. Residues Gly173, Ser213, and 234-235 (GG) each bind substrate. At Ser213 the chain carries Phosphoserine.

This sequence belongs to the triosephosphate isomerase family. In terms of assembly, homodimer.

It localises to the cytoplasm. It catalyses the reaction D-glyceraldehyde 3-phosphate = dihydroxyacetone phosphate. The protein operates within carbohydrate biosynthesis; gluconeogenesis. Its pathway is carbohydrate degradation; glycolysis; D-glyceraldehyde 3-phosphate from glycerone phosphate: step 1/1. Its function is as follows. Involved in the gluconeogenesis. Catalyzes stereospecifically the conversion of dihydroxyacetone phosphate (DHAP) to D-glyceraldehyde-3-phosphate (G3P). The protein is Triosephosphate isomerase of Priestia megaterium (strain DSM 319 / IMG 1521) (Bacillus megaterium).